We begin with the raw amino-acid sequence, 430 residues long: Gamma-glutamyl phosphate reductase (430 aa).

It belongs to the gamma-glutamyl phosphate reductase family.

The protein resides in the cytoplasm. It carries out the reaction L-glutamate 5-semialdehyde + phosphate + NADP(+) = L-glutamyl 5-phosphate + NADPH + H(+). The protein operates within amino-acid biosynthesis; L-proline biosynthesis; L-glutamate 5-semialdehyde from L-glutamate: step 2/2. Its function is as follows. Catalyzes the NADPH-dependent reduction of L-glutamate 5-phosphate into L-glutamate 5-semialdehyde and phosphate. The product spontaneously undergoes cyclization to form 1-pyrroline-5-carboxylate. The polypeptide is Gamma-glutamyl phosphate reductase (Psychrobacter arcticus (strain DSM 17307 / VKM B-2377 / 273-4)).